Consider the following 885-residue polypeptide: Alanine--tRNA ligase (885 aa).

Zn(2+) is bound by residues histidine 564, histidine 568, cysteine 676, and histidine 680.

Belongs to the class-II aminoacyl-tRNA synthetase family. Zn(2+) serves as cofactor.

Its subcellular location is the cytoplasm. The enzyme catalyses tRNA(Ala) + L-alanine + ATP = L-alanyl-tRNA(Ala) + AMP + diphosphate. Its function is as follows. Catalyzes the attachment of alanine to tRNA(Ala) in a two-step reaction: alanine is first activated by ATP to form Ala-AMP and then transferred to the acceptor end of tRNA(Ala). Also edits incorrectly charged Ser-tRNA(Ala) and Gly-tRNA(Ala) via its editing domain. The polypeptide is Alanine--tRNA ligase (Brucella abortus (strain 2308)).